Consider the following 39-residue polypeptide: Photosystem II reaction center protein L (39 aa).

The helical transmembrane segment at 18 to 38 threads the bilayer; sequence SLYLGLLFVFVTGVLMSSYFF.

It belongs to the PsbL family. As to quaternary structure, PSII is composed of 1 copy each of membrane proteins PsbA, PsbB, PsbC, PsbD, PsbE, PsbF, PsbH, PsbI, PsbJ, PsbK, PsbL, PsbM, PsbT, PsbX, PsbY, PsbZ, Psb30/Ycf12, peripheral proteins PsbO, CyanoQ (PsbQ), PsbU, PsbV and a large number of cofactors. It forms dimeric complexes.

It localises to the cellular thylakoid membrane. One of the components of the core complex of photosystem II (PSII). PSII is a light-driven water:plastoquinone oxidoreductase that uses light energy to abstract electrons from H(2)O, generating O(2) and a proton gradient subsequently used for ATP formation. It consists of a core antenna complex that captures photons, and an electron transfer chain that converts photonic excitation into a charge separation. This subunit is found at the monomer-monomer interface and is required for correct PSII assembly and/or dimerization. This chain is Photosystem II reaction center protein L, found in Synechococcus sp. (strain CC9605).